The following is a 466-amino-acid chain: Soluble pyridine nucleotide transhydrogenase (466 aa).

36-45 contributes to the FAD binding site; it reads ERYQNVGGGC.

The protein belongs to the class-I pyridine nucleotide-disulfide oxidoreductase family. FAD serves as cofactor.

The protein localises to the cytoplasm. It catalyses the reaction NAD(+) + NADPH = NADH + NADP(+). Conversion of NADPH, generated by peripheral catabolic pathways, to NADH, which can enter the respiratory chain for energy generation. In Shigella boydii serotype 18 (strain CDC 3083-94 / BS512), this protein is Soluble pyridine nucleotide transhydrogenase.